The sequence spans 623 residues: Glutathione import ATP-binding protein GsiA (623 aa).

2 consecutive ABC transporter domains span residues 15 to 269 and 314 to 564; these read VENL…RALL and LRVR…RKLL. ATP-binding positions include 49-56 and 357-364; these read GESGSGKS.

Belongs to the ABC transporter superfamily. Glutathione importer (TC 3.A.1.5.11) family. In terms of assembly, the complex is composed of two ATP-binding proteins (GsiA), two transmembrane proteins (GsiC and GsiD) and a solute-binding protein (GsiB).

The protein localises to the cell inner membrane. The catalysed reaction is glutathione(out) + ATP + H2O = glutathione(in) + ADP + phosphate + H(+). Its function is as follows. Part of the ABC transporter complex GsiABCD involved in glutathione import. Responsible for energy coupling to the transport system. The polypeptide is Glutathione import ATP-binding protein GsiA (Shigella sonnei (strain Ss046)).